The primary structure comprises 499 residues: Eukaryotic peptide chain release factor GTP-binding subunit ERF3A (499 aa).

Positions 1 to 69 (MELSEPIVEN…PKSVVAPPGA (69 aa)) are disordered. The segment covering 41 to 50 (RPPEESAHEM) has biased composition (basic and acidic residues). The tr-type G domain occupies 72 to 298 (KEHVNVVFIG…DNLPNFNRSV (227 aa)). The tract at residues 81-88 (GHVDAGKS) is G1. Position 84-89 (84-89 (DAGKST)) interacts with GTP. Residues 137–141 (GKTVE) are G2. Positions 158 to 161 (DAPG) are G3. Residues 220–223 (NKMD) and 262–264 (SGL) each bind GTP. Positions 220–223 (NKMD) are G4. The G5 stretch occupies residues 262–264 (SGL).

The protein belongs to the TRAFAC class translation factor GTPase superfamily. Classic translation factor GTPase family. ERF3 subfamily. As to quaternary structure, component of the eRF1-eRF3-GTP ternary complex, composed of ETF1/ERF1 and ERF3 (GSPT1/ERF3A or GSPT2/ERF3B) and GTP. Component of the transient SURF (SMG1-UPF1-eRF1-eRF3) complex. The ETF1-GSPT1 complex interacts with JMJD4. Interacts with PABPC1. Interacts with SHFL.

It carries out the reaction GTP + H2O = GDP + phosphate + H(+). GTPase component of the eRF1-eRF3-GTP ternary complex, a ternary complex that mediates translation termination in response to the termination codons UAA, UAG and UGA. GSPT1/ERF3A mediates ETF1/ERF1 delivery to stop codons: The eRF1-eRF3-GTP complex binds to a stop codon in the ribosomal A-site. GTP hydrolysis by GSPT1/ERF3A induces a conformational change that leads to its dissociation, permitting ETF1/ERF1 to accommodate fully in the A-site. Component of the transient SURF complex which recruits UPF1 to stalled ribosomes in the context of nonsense-mediated decay (NMD) of mRNAs containing premature stop codons. Required for SHFL-mediated translation termination which inhibits programmed ribosomal frameshifting (-1PRF) of mRNA from viruses and cellular genes. This Homo sapiens (Human) protein is Eukaryotic peptide chain release factor GTP-binding subunit ERF3A (GSPT1).